The chain runs to 393 residues: MKIYFDENMPFAKEFFSELCHLNNGIDGEEQGELVPFSGRTLTAAQVADADVLLVRSITQVNEQLLHLNDKISFVGSATIGTDHIDLSYLAKRNITFQSAPGCNAISVAEYVLSALVVLAERYLLTLSSLTVGIVGGGNTGTRLSEKLTALGIQHKICDPLLAEKQKQDKSHPPTDQRHYVPLVDVLACDVISLHVPKVVGGEHPTNKLINAENLALLREDQILISACRGDVIDNHALLALKTAGHGVKIVLDVWQGEPDVLEALIPYTEIATAHIAGYSLEGKARGSEMLYQALCQQLAITPKYQLANFLPSASIPAIEINQDFNQILLNQLVKMVYDVRRDDAIFRQQLFVQGFDSLRKNYPVRREFSAVTVNLSSTTYSDVPHRLGFNKN.

Residues Ser57 and Thr79 each coordinate substrate. Asp159 contacts NAD(+). Arg229 is a catalytic residue. An NAD(+)-binding site is contributed by Asp253. Glu258 is an active-site residue. His275 functions as the Proton donor in the catalytic mechanism. NAD(+) is bound at residue Gly278. A substrate-binding site is contributed by Tyr279.

Belongs to the D-isomer specific 2-hydroxyacid dehydrogenase family. PdxB subfamily. In terms of assembly, homodimer.

The protein resides in the cytoplasm. It catalyses the reaction 4-phospho-D-erythronate + NAD(+) = (R)-3-hydroxy-2-oxo-4-phosphooxybutanoate + NADH + H(+). It participates in cofactor biosynthesis; pyridoxine 5'-phosphate biosynthesis; pyridoxine 5'-phosphate from D-erythrose 4-phosphate: step 2/5. Catalyzes the oxidation of erythronate-4-phosphate to 3-hydroxy-2-oxo-4-phosphonooxybutanoate. This Colwellia psychrerythraea (strain 34H / ATCC BAA-681) (Vibrio psychroerythus) protein is Erythronate-4-phosphate dehydrogenase.